Here is a 65-residue protein sequence, read N- to C-terminus: UPF0434 protein RPB_0294 (65 aa).

Belongs to the UPF0434 family.

This is UPF0434 protein RPB_0294 from Rhodopseudomonas palustris (strain HaA2).